The chain runs to 597 residues: Elongation factor 4 (597 aa).

The 183-residue stretch at 2-184 (DHIRNFSIIA…ALIAKVPPPK (183 aa)) folds into the tr-type G domain. GTP is bound by residues 14–19 (DHGKST) and 131–134 (NKID).

Belongs to the TRAFAC class translation factor GTPase superfamily. Classic translation factor GTPase family. LepA subfamily.

The protein resides in the cell inner membrane. It catalyses the reaction GTP + H2O = GDP + phosphate + H(+). Functionally, required for accurate and efficient protein synthesis under certain stress conditions. May act as a fidelity factor of the translation reaction, by catalyzing a one-codon backward translocation of tRNAs on improperly translocated ribosomes. Back-translocation proceeds from a post-translocation (POST) complex to a pre-translocation (PRE) complex, thus giving elongation factor G a second chance to translocate the tRNAs correctly. Binds to ribosomes in a GTP-dependent manner. In Cupriavidus taiwanensis (strain DSM 17343 / BCRC 17206 / CCUG 44338 / CIP 107171 / LMG 19424 / R1) (Ralstonia taiwanensis (strain LMG 19424)), this protein is Elongation factor 4.